A 232-amino-acid chain; its full sequence is Small ribosomal subunit protein uS2 (232 aa).

This sequence belongs to the universal ribosomal protein uS2 family.

The protein is Small ribosomal subunit protein uS2 of Syntrophomonas wolfei subsp. wolfei (strain DSM 2245B / Goettingen).